A 439-amino-acid chain; its full sequence is Glutamyl-tRNA reductase (439 aa).

Substrate-binding positions include 46–49 (TCNR), Ser-111, 116–118 (EGE), and Gln-122. Residue Cys-47 is the Nucleophile of the active site. Residue 191-196 (GTGAYA) coordinates NADP(+).

It belongs to the glutamyl-tRNA reductase family. As to quaternary structure, homodimer.

The catalysed reaction is (S)-4-amino-5-oxopentanoate + tRNA(Glu) + NADP(+) = L-glutamyl-tRNA(Glu) + NADPH + H(+). Its pathway is porphyrin-containing compound metabolism; protoporphyrin-IX biosynthesis; 5-aminolevulinate from L-glutamyl-tRNA(Glu): step 1/2. In terms of biological role, catalyzes the NADPH-dependent reduction of glutamyl-tRNA(Glu) to glutamate 1-semialdehyde (GSA). The sequence is that of Glutamyl-tRNA reductase from Clavibacter michiganensis subsp. michiganensis (strain NCPPB 382).